The following is a 230-amino-acid chain: CRP-like protein Clp (230 aa).

Residue 18–139 coordinates a nucleoside 3',5'-cyclic phosphate; sequence PSLALDAGTI…APKILYAIGV (122 aa). Residues 158-230 enclose the HTH crp-type domain; that stretch reads LDVTDRIVRT…GKTVVLYGTR (73 aa). The segment at residues 190–209 is a DNA-binding region (H-T-H motif); the sequence is RQELARLVGCSREMAGRVLK.

In terms of assembly, homodimer.

It localises to the cytoplasm. Allosterically inhibited by cyclic di-GMP (c-di-GMP), which binds to Clp and abolishes its ability to bind its target gene promoter. In terms of biological role, global transcriptional regulator that regulates virulence factors production by activating or repressing the expression of a large set of genes in diffusible signal factor (DSF) pathway. The protein is CRP-like protein Clp (clp) of Xanthomonas oryzae pv. oryzae (strain MAFF 311018).